We begin with the raw amino-acid sequence, 438 residues long: MRLTKAFQPTLKEVPAEAQIASHRLMLRAGLVRQTASGIYAWLPAGLRVLRNIEQIIREEQDAIGAQEVLMPTLQSAELWRRSGRYDAYGPEMLRIQDRHGRDLLYGPTNEEMITDIFGSSVKSYKELPKALYHIQWKFRDEVRPRFGVMRGREFLMKDAYSFDASYEGAVASYRRMMLSYLRIFQRLGVRAVPMVADTGPIGGDLSHEFLVLAPTGESAVFFDAALEEQDWLSRPVDCDDAESLATFFATVTDHYAATDEKHDEAEWAKVPAERKREGRGIEVGHIFYFGTKYTASMGIEVSGPDGAPFHPHMGSYGVGVSRLVGAIIEASHDDAGIIWPASVAPYRAAILNLRQDDEACDAICDRIYGTDPENLLYDDRSERAGVKFNDADLMGHPWQIIVGPRGAKEGKVELKQRATGERFELSVEDALAKIGAA.

Belongs to the class-II aminoacyl-tRNA synthetase family. ProS type 2 subfamily. In terms of assembly, homodimer.

The protein localises to the cytoplasm. It catalyses the reaction tRNA(Pro) + L-proline + ATP = L-prolyl-tRNA(Pro) + AMP + diphosphate. Functionally, catalyzes the attachment of proline to tRNA(Pro) in a two-step reaction: proline is first activated by ATP to form Pro-AMP and then transferred to the acceptor end of tRNA(Pro). This is Proline--tRNA ligase from Gluconobacter oxydans (strain 621H) (Gluconobacter suboxydans).